The sequence spans 322 residues: Malate dehydrogenase (322 aa).

NAD(+) is bound by residues 10–15 and Asp-34; that span reads GSGQIG. Residues Arg-83 and Arg-89 each coordinate substrate. NAD(+) is bound by residues Asn-96 and 119–121; that span reads ITN. Residues Asn-121 and Arg-152 each contribute to the substrate site. His-176 serves as the catalytic Proton acceptor.

The protein belongs to the LDH/MDH superfamily. MDH type 3 family.

The catalysed reaction is (S)-malate + NAD(+) = oxaloacetate + NADH + H(+). Its function is as follows. Catalyzes the reversible oxidation of malate to oxaloacetate. The polypeptide is Malate dehydrogenase (Bradyrhizobium sp. (strain ORS 278)).